We begin with the raw amino-acid sequence, 201 residues long: Dephospho-CoA kinase (201 aa).

The 198-residue stretch at 4 to 201 folds into the DPCK domain; that stretch reads SVGLTGNIAS…KYLREAKIKQ (198 aa). Residue 12–17 coordinates ATP; the sequence is ASGKST.

This sequence belongs to the CoaE family.

It is found in the cytoplasm. It carries out the reaction 3'-dephospho-CoA + ATP = ADP + CoA + H(+). It functions in the pathway cofactor biosynthesis; coenzyme A biosynthesis; CoA from (R)-pantothenate: step 5/5. In terms of biological role, catalyzes the phosphorylation of the 3'-hydroxyl group of dephosphocoenzyme A to form coenzyme A. The protein is Dephospho-CoA kinase of Legionella pneumophila (strain Paris).